Consider the following 364-residue polypeptide: Aminomethyltransferase (364 aa).

It belongs to the GcvT family. As to quaternary structure, the glycine cleavage system is composed of four proteins: P, T, L and H.

It catalyses the reaction N(6)-[(R)-S(8)-aminomethyldihydrolipoyl]-L-lysyl-[protein] + (6S)-5,6,7,8-tetrahydrofolate = N(6)-[(R)-dihydrolipoyl]-L-lysyl-[protein] + (6R)-5,10-methylene-5,6,7,8-tetrahydrofolate + NH4(+). The glycine cleavage system catalyzes the degradation of glycine. In Escherichia coli O17:K52:H18 (strain UMN026 / ExPEC), this protein is Aminomethyltransferase.